The sequence spans 204 residues: Tumor necrosis factor receptor superfamily member 26 (204 aa).

A signal peptide spans 1 to 19 (MTRLRLLLLLGLLLRVAVC). The Extracellular segment spans residues 20 to 164 (SVNTITLCKI…SQCFCFSKPL (145 aa)). 9 disulfides stabilise this stretch: Cys27–Cys38, Cys39–Cys52, Cys42–Cys61, Cys64–Cys79, Cys82–Cys95, Cys85–Cys103, Cys105–Cys120, Cys123–Cys135, and Cys126–Cys143. TNFR-Cys repeat units lie at residues 27–61 (CKIG…KSEC), 63–103 (PCDS…DRVC), and 104–143 (QCKQ…DTVC). The N-linked (GlcNAc...) asparagine glycan is linked to Asn57. A glycan (N-linked (GlcNAc...) asparagine) is linked at Asn136. Residues 165-185 (GIVVIIAAFIIIIGAVIILIL) form a helical membrane-spanning segment. Over 186 to 204 (KIICYCKRGENIQLSSTML) the chain is Cytoplasmic.

Expressed in thymus and spleen. Detectable levels in lung.

Its subcellular location is the membrane. In Mus musculus (Mouse), this protein is Tumor necrosis factor receptor superfamily member 26 (Tnfrsf26).